The following is a 268-amino-acid chain: 4-hydroxy-tetrahydrodipicolinate reductase (268 aa).

An NAD(+)-binding site is contributed by 9-14 (GCSGRM). Residue R36 participates in NADP(+) binding. Residues 98-100 (GTT) and 122-125 (APNT) contribute to the NAD(+) site. Catalysis depends on H155, which acts as the Proton donor/acceptor. H156 is a (S)-2,3,4,5-tetrahydrodipicolinate binding site. The active-site Proton donor is K159. 165-166 (GT) lines the (S)-2,3,4,5-tetrahydrodipicolinate pocket.

This sequence belongs to the DapB family.

It localises to the cytoplasm. The catalysed reaction is (S)-2,3,4,5-tetrahydrodipicolinate + NAD(+) + H2O = (2S,4S)-4-hydroxy-2,3,4,5-tetrahydrodipicolinate + NADH + H(+). It catalyses the reaction (S)-2,3,4,5-tetrahydrodipicolinate + NADP(+) + H2O = (2S,4S)-4-hydroxy-2,3,4,5-tetrahydrodipicolinate + NADPH + H(+). The protein operates within amino-acid biosynthesis; L-lysine biosynthesis via DAP pathway; (S)-tetrahydrodipicolinate from L-aspartate: step 4/4. Functionally, catalyzes the conversion of 4-hydroxy-tetrahydrodipicolinate (HTPA) to tetrahydrodipicolinate. The protein is 4-hydroxy-tetrahydrodipicolinate reductase of Colwellia psychrerythraea (strain 34H / ATCC BAA-681) (Vibrio psychroerythus).